The sequence spans 475 residues: Chromosomal replication initiator protein DnaA (475 aa).

Residues 1 to 71 form a domain I, interacts with DnaA modulators region; sequence MTNDTWNEVR…RQLSAHGAGA (71 aa). Residues 71 to 133 form a domain II region; it reads ADRVKFTVSP…PAQPRELPGA (63 aa). The segment covering 107–127 has biased composition (low complexity); it reads APAPVHHTAPAPAPVAAPAQP. Residues 107-129 form a disordered region; it reads APAPVHHTAPAPAPVAAPAQPRE. The domain III, AAA+ region stretch occupies residues 134–355; the sequence is KLNPNFTFAN…GALTRLFAFA (222 aa). ATP is bound by residues G178, G180, K181, and T182. The tract at residues 356 to 475 is domain IV, binds dsDNA; sequence DLVRREVTVD…AELLRRTLEA (120 aa).

It belongs to the DnaA family. As to quaternary structure, oligomerizes as a right-handed, spiral filament on DNA at oriC.

It is found in the cytoplasm. Plays an essential role in the initiation and regulation of chromosomal replication. ATP-DnaA binds to the origin of replication (oriC) to initiate formation of the DNA replication initiation complex once per cell cycle. Binds the DnaA box (a 9 base pair repeat at the origin) and separates the double-stranded (ds)DNA. Forms a right-handed helical filament on oriC DNA; dsDNA binds to the exterior of the filament while single-stranded (ss)DNA is stabiized in the filament's interior. The ATP-DnaA-oriC complex binds and stabilizes one strand of the AT-rich DNA unwinding element (DUE), permitting loading of DNA polymerase. After initiation quickly degrades to an ADP-DnaA complex that is not apt for DNA replication. Binds acidic phospholipids. The chain is Chromosomal replication initiator protein DnaA from Jannaschia sp. (strain CCS1).